Here is a 319-residue protein sequence, read N- to C-terminus: Phospho-N-acetylmuramoyl-pentapeptide-transferase (319 aa).

The next 10 membrane-spanning stretches (helical) occupy residues 5-25 (LIPFISSFALTVIFLPLFIGF), 51-71 (TMGGVVFMLASVISTLWVLIW), 79-99 (TWILIIAFLGYGIIGFLDDGI), 116-136 (LGQIIIAALIIALAFSDHFAF), 149-169 (SFLFSLFVLFWLVGFSNAVNL), 172-192 (GLDGLATGLSIIAYATYAWIA), 197-217 (NWVIVAFTLSVIGGLVGFFIF), 224-244 (IFMGDAGSLALGGGLATVSIF), 252-272 (LLIGIVFVLETLSVILQVISF), and 299-319 (VDIVFWIVGLIGSIIYLIIWG).

The protein belongs to the glycosyltransferase 4 family. MraY subfamily. The cofactor is Mg(2+).

It localises to the cell membrane. The enzyme catalyses UDP-N-acetyl-alpha-D-muramoyl-L-alanyl-gamma-D-glutamyl-L-lysyl-D-alanyl-D-alanine + di-trans,octa-cis-undecaprenyl phosphate = Mur2Ac(oyl-L-Ala-gamma-D-Glu-L-Lys-D-Ala-D-Ala)-di-trans,octa-cis-undecaprenyl diphosphate + UMP. Its pathway is cell wall biogenesis; peptidoglycan biosynthesis. Its function is as follows. Catalyzes the initial step of the lipid cycle reactions in the biosynthesis of the cell wall peptidoglycan: transfers peptidoglycan precursor phospho-MurNAc-pentapeptide from UDP-MurNAc-pentapeptide onto the lipid carrier undecaprenyl phosphate, yielding undecaprenyl-pyrophosphoryl-MurNAc-pentapeptide, known as lipid I. In Lactobacillus gasseri (strain ATCC 33323 / DSM 20243 / BCRC 14619 / CIP 102991 / JCM 1131 / KCTC 3163 / NCIMB 11718 / NCTC 13722 / AM63), this protein is Phospho-N-acetylmuramoyl-pentapeptide-transferase.